Here is a 541-residue protein sequence, read N- to C-terminus: MASQEFEVEAIVDKRQDKNGNTQYLVRWKGYDKQDDTWEPEQHLMNCEKCVHDFNRRQTEKQKKLTWTTTSRIFSNNARRRTSRSTKANYSKNSPKTPVTDKHHRSKNCKLFAASKNVRRKAASTLSDTKNMEIINSTIETLAPDSPFDHKKTVSGFQKLEKLDPIAADQQDTVVFKVTEGKLLRDPLSHPGAEQTGIQNKTQMHPLMSQMSGSVTASMATGSATRKGIVVLIDPLAANGTTDMHTSVPRVKGGQRNITDDSRGQPFIKKMHFTIRLTESAITYRDIVVKKEDGFTQIVLSTRSTEKNALNTEVIKEMVNALNSAAADDSKLVLFSAAGSVFCCGLDFGYFVRHLRNDRNTASLEMVDTIKNFVNTFIQFKKPIVVSVNGPAIGLGASILPLCDLVWANEKAWFQTPYTTFGQSPDGCSSITFPKMMGKASANEMLIAGRKLTAREACAKGLVSQVFLTGTFTQEVMIQIKELASYNAIVLEECKALVRCNIKLELEQANERECEVLRKIWSSAQGIESMLKYVENKIDEF.

The Chromo domain maps to 6–66; it reads FEVEAIVDKR…RQTEKQKKLT (61 aa). The disordered stretch occupies residues 72 to 104; the sequence is RIFSNNARRRTSRSTKANYSKNSPKTPVTDKHH. A compositionally biased stretch (polar residues) spans 87-97; it reads KANYSKNSPKT.

As to expression, testis specific.

The protein localises to the nucleus. The catalysed reaction is L-lysyl-[protein] + acetyl-CoA = N(6)-acetyl-L-lysyl-[protein] + CoA + H(+). Functionally, may have histone acetyltransferase activity. This is Testis-specific chromodomain protein Y 2 (CDY2A) from Homo sapiens (Human).